A 698-amino-acid chain; its full sequence is Probable Xaa-Pro aminopeptidase P (698 aa).

Positions 509, 520, 604, and 618 each coordinate Mn(2+).

The protein belongs to the peptidase M24B family. It depends on Mn(2+) as a cofactor.

It catalyses the reaction Release of any N-terminal amino acid, including proline, that is linked to proline, even from a dipeptide or tripeptide.. Catalyzes the removal of a penultimate prolyl residue from the N-termini of peptides. This chain is Probable Xaa-Pro aminopeptidase P (AMPP), found in Trichophyton verrucosum (strain HKI 0517).